The sequence spans 592 residues: Aspartate--tRNA ligase (592 aa).

Residue glutamate 171 participates in L-aspartate binding. The interval 195–198 (QLFK) is aspartate. An L-aspartate-binding site is contributed by arginine 217. ATP-binding positions include 217–219 (RDE) and glutamine 226. Histidine 448 serves as a coordination point for L-aspartate. Residue glutamate 482 participates in ATP binding. Arginine 489 is an L-aspartate binding site. 534 to 537 (GLDR) contributes to the ATP binding site.

It belongs to the class-II aminoacyl-tRNA synthetase family. Type 1 subfamily. As to quaternary structure, homodimer.

It localises to the cytoplasm. It catalyses the reaction tRNA(Asp) + L-aspartate + ATP = L-aspartyl-tRNA(Asp) + AMP + diphosphate. Functionally, catalyzes the attachment of L-aspartate to tRNA(Asp) in a two-step reaction: L-aspartate is first activated by ATP to form Asp-AMP and then transferred to the acceptor end of tRNA(Asp). This Vibrio atlanticus (strain LGP32) (Vibrio splendidus (strain Mel32)) protein is Aspartate--tRNA ligase.